The sequence spans 75 residues: DNA-directed RNA polymerase subunit omega (75 aa).

The protein belongs to the RNA polymerase subunit omega family. The RNAP catalytic core consists of 2 alpha, 1 beta, 1 beta' and 1 omega subunit. When a sigma factor is associated with the core the holoenzyme is formed, which can initiate transcription.

It catalyses the reaction RNA(n) + a ribonucleoside 5'-triphosphate = RNA(n+1) + diphosphate. Its function is as follows. Promotes RNA polymerase assembly. Latches the N- and C-terminal regions of the beta' subunit thereby facilitating its interaction with the beta and alpha subunits. This chain is DNA-directed RNA polymerase subunit omega, found in Nitratidesulfovibrio vulgaris (strain DSM 19637 / Miyazaki F) (Desulfovibrio vulgaris).